Reading from the N-terminus, the 139-residue chain is MLMPKRVKYRKTQRGRMKGNAGRGTSVAFGSFGLKAMEPAWITSRQIEAARIAMTRYMKRDGKVWIRIFPDKPVTQKPAETRMGSGKGSPEFWVAVVKPGRVMFEADGVSKEIATEAFRLAAKKLPIKTKFIIRPDYEG.

It belongs to the universal ribosomal protein uL16 family. In terms of assembly, part of the 50S ribosomal subunit.

Binds 23S rRNA and is also seen to make contacts with the A and possibly P site tRNAs. This is Large ribosomal subunit protein uL16 from Chlorobium chlorochromatii (strain CaD3).